The sequence spans 133 residues: ATP synthase epsilon chain (133 aa).

This sequence belongs to the ATPase epsilon chain family. In terms of assembly, F-type ATPases have 2 components, CF(1) - the catalytic core - and CF(0) - the membrane proton channel. CF(1) has five subunits: alpha(3), beta(3), gamma(1), delta(1), epsilon(1). CF(0) has three main subunits: a, b and c.

Its subcellular location is the cell membrane. In terms of biological role, produces ATP from ADP in the presence of a proton gradient across the membrane. This chain is ATP synthase epsilon chain, found in Halalkalibacterium halodurans (strain ATCC BAA-125 / DSM 18197 / FERM 7344 / JCM 9153 / C-125) (Bacillus halodurans).